A 338-amino-acid chain; its full sequence is Putative ankyrin repeat protein CBU_0781 (338 aa).

A disordered region spans residues M1–P31. Residues P7–R19 are compositionally biased toward low complexity. Residues T20–P31 are compositionally biased toward basic residues. ANK repeat units lie at residues Q92–K124 and L125–K157. Residues S197–R242 adopt a coiled-coil conformation. The segment at K319–R338 is disordered. Low complexity predominate over residues L325–R338.

The protein is Putative ankyrin repeat protein CBU_0781 of Coxiella burnetii (strain RSA 493 / Nine Mile phase I).